The following is an 896-amino-acid chain: Translation initiation factor IF-2 (896 aa).

A disordered region spans residues 32 to 306 (LAQAGSSDTK…HKTKKQSEEH (275 aa)). Polar residues-rich tracts occupy residues 35-48 (AGSSDTKNSPVSKA) and 114-126 (ADSTEPLSNSSQE). The span at 156–170 (ARNEETPIIRTRTEP) shows a compositional bias: basic and acidic residues. Residues 213-237 (QQTRPSVETASTKQQQPSGTNTRPA) are compositionally biased toward polar residues. Positions 256-280 (RGPDRDRTKRSDENVKAFTGRDRYG) are enriched in basic and acidic residues. A tr-type G domain is found at 401 to 570 (IRSPIVAFMG…ALQAEVLELK (170 aa)). A G1 region spans residues 410–417 (GHVDHGKT). Residue 410 to 417 (GHVDHGKT) participates in GTP binding. Residues 435–439 (AITQH) are G2. The G3 stretch occupies residues 456–459 (DTPG). Residues 456–460 (DTPGH) and 510–513 (NKCD) each bind GTP. Residues 510-513 (NKCD) form a G4 region. Residues 546-548 (SAK) are G5.

Belongs to the TRAFAC class translation factor GTPase superfamily. Classic translation factor GTPase family. IF-2 subfamily.

It localises to the cytoplasm. In terms of biological role, one of the essential components for the initiation of protein synthesis. Protects formylmethionyl-tRNA from spontaneous hydrolysis and promotes its binding to the 30S ribosomal subunits. Also involved in the hydrolysis of GTP during the formation of the 70S ribosomal complex. This Chlamydia muridarum (strain MoPn / Nigg) protein is Translation initiation factor IF-2 (infB).